A 234-amino-acid polypeptide reads, in one-letter code: Probable transcriptional regulatory protein PSPPH_2212 (234 aa).

This sequence belongs to the TACO1 family.

The protein localises to the cytoplasm. This Pseudomonas savastanoi pv. phaseolicola (strain 1448A / Race 6) (Pseudomonas syringae pv. phaseolicola (strain 1448A / Race 6)) protein is Probable transcriptional regulatory protein PSPPH_2212.